Consider the following 358-residue polypeptide: DnaJ homolog subfamily B member 11 (358 aa).

Residues 1–22 form the signal peptide; that stretch reads MAPQNLGTLCLLLLYLLGAAIA. Positions 25 to 90 constitute a J domain; the sequence is DFYKILGVPR…EKRKQYDTYG (66 aa). Thr188 carries the phosphothreonine modification. N-linked (GlcNAc...) asparagine glycosylation is present at Asn261.

Part of a large chaperone multiprotein complex comprising DNAJB11, HSP90B1, HSPA5, HYOU, PDIA2, PDIA4, PDIA6, PPIB, SDF2L1, UGGT1 and very small amounts of ERP29, but not, or at very low levels, CALR nor CANX. Binds to denatured substrates in an ATP-independent manner. Interacts via the J domain with HSPA5 in an ATP-dependent manner. In terms of processing, contains high-mannose Endo H-sensitive carbohydrates. Post-translationally, cys-169, Cys-171, Cys-193 and Cys-196 form intramolecular disulfide bonds. The preferential partner for each Cys is not known. In terms of tissue distribution, pancreas.

The protein resides in the endoplasmic reticulum lumen. In terms of biological role, as a co-chaperone for HSPA5 it is required for proper folding, trafficking or degradation of proteins. Binds directly to both unfolded proteins that are substrates for ERAD and nascent unfolded peptide chains, but dissociates from the HSPA5-unfolded protein complex before folding is completed. May help recruiting HSPA5 and other chaperones to the substrate. Stimulates HSPA5 ATPase activity. It is necessary for maturation and correct trafficking of PKD1. The polypeptide is DnaJ homolog subfamily B member 11 (DNAJB11) (Canis lupus familiaris (Dog)).